Consider the following 181-residue polypeptide: Oligoribonuclease (181 aa).

One can recognise an Exonuclease domain in the interval 8 to 171 (LVWIDMEMTG…DDIRESIAEL (164 aa)). Residue tyrosine 129 is part of the active site.

This sequence belongs to the oligoribonuclease family.

The protein resides in the cytoplasm. In terms of biological role, 3'-to-5' exoribonuclease specific for small oligoribonucleotides. This Pseudoalteromonas atlantica (strain T6c / ATCC BAA-1087) protein is Oligoribonuclease.